The sequence spans 419 residues: UDP-N-acetylglucosamine 1-carboxyvinyltransferase (419 aa).

Residue 22–23 (KN) coordinates phosphoenolpyruvate. R91 serves as a coordination point for UDP-N-acetyl-alpha-D-glucosamine. The Proton donor role is filled by C115. 2-(S-cysteinyl)pyruvic acid O-phosphothioketal is present on C115. UDP-N-acetyl-alpha-D-glucosamine contacts are provided by residues 120-124 (RPVDL), 160-163 (KVSV), D305, and I327.

This sequence belongs to the EPSP synthase family. MurA subfamily.

The protein resides in the cytoplasm. It catalyses the reaction phosphoenolpyruvate + UDP-N-acetyl-alpha-D-glucosamine = UDP-N-acetyl-3-O-(1-carboxyvinyl)-alpha-D-glucosamine + phosphate. It participates in cell wall biogenesis; peptidoglycan biosynthesis. Functionally, cell wall formation. Adds enolpyruvyl to UDP-N-acetylglucosamine. The chain is UDP-N-acetylglucosamine 1-carboxyvinyltransferase from Cronobacter sakazakii (strain ATCC BAA-894) (Enterobacter sakazakii).